Reading from the N-terminus, the 450-residue chain is Protein tweety homolog 1 (450 aa).

Residues 1 to 43 (MGAPPGYRPSAWVHLLHQLPRADFQLRPVPSVFAPQEQEYQQA) are Extracellular-facing. Residues 44–64 (LLLVAALAGLGLGLSLIFIAV) traverse the membrane as a helical segment. Residues 65–88 (YLIRFCCCRPPEPPGSKIPSPGGG) are Cytoplasmic-facing. A helical transmembrane segment spans residues 89–109 (CVTWSCIVALLAGCTGIGIGF). Residues 110–214 (YGNSETSDGV…NVSFVEEYRW (105 aa)) lie on the Extracellular side of the membrane. N-linked (GlcNAc...) asparagine glycosylation is found at asparagine 130 and asparagine 205. Residues 215–235 (LAYVLLLLLELLVCLFTLLGL) traverse the membrane as a helical segment. Topologically, residues 236–240 (AKQSK) are cytoplasmic. The chain crosses the membrane as a helical span at residues 241–261 (WLVIVMTVMSLLVLVLSWGSM). Topologically, residues 262 to 390 (GLEAATAVGL…LRGLCEDALE (129 aa)) are extracellular. Disulfide bonds link cysteine 275-cysteine 385 and cysteine 303-cysteine 370. Residues asparagine 284 and asparagine 355 are each glycosylated (N-linked (GlcNAc...) asparagine). The helical transmembrane segment at 391 to 411 (GLLFLLLFSLLSAGALATALC) threads the bilayer. Topologically, residues 412-450 (SLPRAWALFPPSDDYDDTDDDDPFNPQESKRFVQWQSSI) are cytoplasmic. The interval 428–450 (DTDDDDPFNPQESKRFVQWQSSI) is disordered. Residue serine 440 is modified to Phosphoserine.

Belongs to the tweety family. In terms of assembly, homotetramer; disulfide-linked. Homodimer. Post-translationally, N-glycosylated. Contains high-mannose, hybrid and complex oligosaccharides. Expressed in brain, eye, ovary and testis, and at lower levels in muscle, placenta, liver and lung.

It localises to the cell membrane. The enzyme catalyses chloride(in) = chloride(out). The catalysed reaction is L-glutamate(out) = L-glutamate(in). Calcium-independent, swelling-dependent volume-regulated anion channel (VRAC-swell) which plays a pivotal role in the process of regulatory volume decrease (RVD) in the brain through the efflux of anions like chloride and organic osmolytes like glutamate. Functionally, ca(2+)-independent, swelling-activated chloride channel, possibly involved in regulation of cell volume. This is Protein tweety homolog 1 (TTYH1) from Homo sapiens (Human).